A 557-amino-acid polypeptide reads, in one-letter code: Potassium-transporting ATPase potassium-binding subunit (557 aa).

Helical transmembrane passes span 5-25 (GFLL…PLGS), 63-83 (LCAI…MLLG), 132-152 (GLTV…FALI), 170-190 (LLRI…LFFI), 253-273 (FVQM…FGEV), 283-303 (LLWA…WAEV), 329-349 (VLVS…AVIA), 356-376 (ALGG…FGGV), 379-399 (GLYG…LMIG), 416-436 (LTAL…ALAM), 484-504 (LLAF…MAIA), and 526-546 (LFVG…FIPA).

This sequence belongs to the KdpA family. The system is composed of three essential subunits: KdpA, KdpB and KdpC.

The protein localises to the cell inner membrane. Its function is as follows. Part of the high-affinity ATP-driven potassium transport (or Kdp) system, which catalyzes the hydrolysis of ATP coupled with the electrogenic transport of potassium into the cytoplasm. This subunit binds the periplasmic potassium ions and delivers the ions to the membrane domain of KdpB through an intramembrane tunnel. In Escherichia coli (strain SE11), this protein is Potassium-transporting ATPase potassium-binding subunit.